A 473-amino-acid chain; its full sequence is Mogroside IIIx synthase (473 aa).

Histidine 21 (proton acceptor) is an active-site residue. Residue aspartate 123 is the Charge relay of the active site. UDP-alpha-D-glucose-binding residues include threonine 274, glutamine 337, tryptophan 355, asparagine 356, serine 357, glutamate 360, aspartate 376, and glutamine 377.

The protein belongs to the UDP-glycosyltransferase family. As to expression, highly expressed in mature fruits.

It carries out the reaction mogroside IIE + UDP-alpha-D-glucose = mogroside IIIX + UDP + H(+). The catalysed reaction is mogroside III + UDP-alpha-D-glucose = siamenoside I + UDP + H(+). It participates in secondary metabolite biosynthesis; terpenoid biosynthesis. Its function is as follows. UDP-glycosyltransferase involved in the biosynthesis of cucurbitacin and mogroside tetracyclic triterpene natural products (e.g. siamenoside I and mogrosides IV, V and VI). Cucurbitacins have cytotoxic properties and exhibit deterrent taste as a defense barrier against herbivores. Mogrosides are nonsugar highly oxygenated compounds used as high-intensity zero-calorie sweeteners; they also possess pharmacological properties such as regulating immunity, lowering blood sugar and lipid levels, protecting the liver, and acting as antioxidants and antitumor agents. Catalyzes the branched glucosylations of mogroside II-E and mogroside III. This is Mogroside IIIx synthase from Siraitia grosvenorii (Monk's fruit).